A 396-amino-acid polypeptide reads, in one-letter code: Putative F-box/kelch-repeat protein At3g17540 (396 aa).

Positions 4-50 (TMVISDLPHEIESEILSRVPTKSLAKLHTTCKRWYALFRDPRFVKKN) constitute an F-box domain. Kelch repeat units lie at residues 163–209 (LRYC…GMSL), 253–299 (VLSI…FLAV), and 338–386 (RIYI…KRKG).

The polypeptide is Putative F-box/kelch-repeat protein At3g17540 (Arabidopsis thaliana (Mouse-ear cress)).